A 247-amino-acid polypeptide reads, in one-letter code: Cell division protein ZapD (247 aa).

The protein belongs to the ZapD family. Interacts with FtsZ.

The protein localises to the cytoplasm. Functionally, cell division factor that enhances FtsZ-ring assembly. Directly interacts with FtsZ and promotes bundling of FtsZ protofilaments, with a reduction in FtsZ GTPase activity. This Shigella sonnei (strain Ss046) protein is Cell division protein ZapD.